A 76-amino-acid polypeptide reads, in one-letter code: Small ribosomal subunit protein bS18 (76 aa).

It belongs to the bacterial ribosomal protein bS18 family. In terms of assembly, part of the 30S ribosomal subunit. Forms a tight heterodimer with protein bS6.

Binds as a heterodimer with protein bS6 to the central domain of the 16S rRNA, where it helps stabilize the platform of the 30S subunit. This is Small ribosomal subunit protein bS18 from Pseudomonas fluorescens (strain ATCC BAA-477 / NRRL B-23932 / Pf-5).